A 450-amino-acid chain; its full sequence is LanC-like protein 2 (450 aa).

The N-myristoyl glycine moiety is linked to residue glycine 2. Positions glycine 2–glycine 15 are interaction with inositol phospholipids. Tyrosine 198 carries the phosphotyrosine modification.

This sequence belongs to the LanC-like protein family. As to quaternary structure, interacts with an array of inositol phospholipids such as phosphatidylinositol 3-phosphate (PI3P), phosphatidylinositol 4-phosphate (PI4P) and phosphatidylinositol 5-phosphate (PI5P). PIP-binding enhances membrane association. Post-translationally, myristoylated. Essential for membrane association. Expressed in brain and testis.

It is found in the nucleus. The protein localises to the cytoplasm. Its subcellular location is the cell membrane. Functionally, necessary for abscisic acid (ABA) binding on the cell membrane and activation of the ABA signaling pathway in granulocytes. In Homo sapiens (Human), this protein is LanC-like protein 2 (LANCL2).